A 398-amino-acid polypeptide reads, in one-letter code: 1-deoxy-D-xylulose 5-phosphate reductoisomerase (398 aa).

NADPH-binding residues include Thr-10, Gly-11, Ser-12, Ile-13, Lys-37, Asn-38, and Asn-124. Lys-125 contributes to the 1-deoxy-D-xylulose 5-phosphate binding site. Glu-126 contributes to the NADPH binding site. Asp-150 provides a ligand contact to Mn(2+). 1-deoxy-D-xylulose 5-phosphate is bound by residues Ser-151, Glu-152, Ser-186, and His-209. Glu-152 contributes to the Mn(2+) binding site. Gly-215 contributes to the NADPH binding site. Residues Ser-222, Asn-227, Lys-228, and Glu-231 each contribute to the 1-deoxy-D-xylulose 5-phosphate site. Mn(2+) is bound at residue Glu-231.

This sequence belongs to the DXR family. As to quaternary structure, homodimer. It depends on Mg(2+) as a cofactor. Mn(2+) is required as a cofactor.

The enzyme catalyses 2-C-methyl-D-erythritol 4-phosphate + NADP(+) = 1-deoxy-D-xylulose 5-phosphate + NADPH + H(+). It functions in the pathway isoprenoid biosynthesis; isopentenyl diphosphate biosynthesis via DXP pathway; isopentenyl diphosphate from 1-deoxy-D-xylulose 5-phosphate: step 1/6. In terms of biological role, catalyzes the NADPH-dependent rearrangement and reduction of 1-deoxy-D-xylulose-5-phosphate (DXP) to 2-C-methyl-D-erythritol 4-phosphate (MEP). This chain is 1-deoxy-D-xylulose 5-phosphate reductoisomerase, found in Buchnera aphidicola subsp. Acyrthosiphon pisum (strain APS) (Acyrthosiphon pisum symbiotic bacterium).